A 557-amino-acid polypeptide reads, in one-letter code: Warthog protein 4 (557 aa).

The first 20 residues, 1–20 (MRFSLLALVLLSSSYKFTYG), serve as a signal peptide directing secretion. The disordered stretch occupies residues 272 to 308 (QETNPQPPPPPGQQGGFVQPQGFQPQGGFQPQGFQPQ). Low complexity predominate over residues 287–308 (GFVQPQGFQPQGGFQPQGFQPQ).

The protein belongs to the hedgehog family. Post-translationally, the C-terminal domain displays an autoproteolysis activity.

It localises to the secreted. Its subcellular location is the cell surface. It is found in the cell membrane. The protein localises to the extracellular space. Intercellular signal essential for a variety of patterning events during development. In Caenorhabditis elegans, this protein is Warthog protein 4 (wrt-4).